The following is a 480-amino-acid chain: Probable glycine dehydrogenase (decarboxylating) subunit 2 (480 aa).

Position 265 is an N6-(pyridoxal phosphate)lysine (lysine 265).

It belongs to the GcvP family. C-terminal subunit subfamily. As to quaternary structure, the glycine cleavage system is composed of four proteins: P, T, L and H. In this organism, the P 'protein' is a heterodimer of two subunits. It depends on pyridoxal 5'-phosphate as a cofactor.

The catalysed reaction is N(6)-[(R)-lipoyl]-L-lysyl-[glycine-cleavage complex H protein] + glycine + H(+) = N(6)-[(R)-S(8)-aminomethyldihydrolipoyl]-L-lysyl-[glycine-cleavage complex H protein] + CO2. The glycine cleavage system catalyzes the degradation of glycine. The P protein binds the alpha-amino group of glycine through its pyridoxal phosphate cofactor; CO(2) is released and the remaining methylamine moiety is then transferred to the lipoamide cofactor of the H protein. In Thermosipho africanus (strain TCF52B), this protein is Probable glycine dehydrogenase (decarboxylating) subunit 2.